Consider the following 33-residue polypeptide: Cytochrome b6-f complex subunit 6 (33 aa).

Residues 4 to 24 (ITIISYFGLLLASIIFTLVLF) form a helical membrane-spanning segment.

It belongs to the PetL family. As to quaternary structure, the 4 large subunits of the cytochrome b6-f complex are cytochrome b6, subunit IV (17 kDa polypeptide, PetD), cytochrome f and the Rieske protein, while the 4 small subunits are PetG, PetL, PetM and PetN. The complex functions as a dimer.

It is found in the plastid. It localises to the chloroplast thylakoid membrane. Its function is as follows. Component of the cytochrome b6-f complex, which mediates electron transfer between photosystem II (PSII) and photosystem I (PSI), cyclic electron flow around PSI, and state transitions. PetL is important for photoautotrophic growth as well as for electron transfer efficiency and stability of the cytochrome b6-f complex. This Pinus mugo (Dwarf mountain pine) protein is Cytochrome b6-f complex subunit 6.